Consider the following 690-residue polypeptide: Beta-galactosidase (690 aa).

Position 173 (N173) interacts with substrate. Catalysis depends on E174, which acts as the Proton donor. Residue W345 participates in substrate binding.

Belongs to the glycosyl hydrolase 42 family.

The enzyme catalyses Hydrolysis of terminal non-reducing beta-D-galactose residues in beta-D-galactosides.. Its activity is regulated as follows. Activity stimulated by beta-mercaptoethanol. In terms of biological role, highly specific towards beta-D-galactoside substrates. Hydrolyzes 5-bromo-4-chloro-3-indolyl-beta-D-galactopyranoside (X-Gal) and o-nitrophenyl-beta-D-galactopyranoside (ONPG). Has activity against p-nitrophenyl(pNP)-beta-D-galactoside, but not significantly at all towards pNP-alpha-D-galactoside, pNP-beta-D-glucoside, pNP-beta-D-mannoside, pNP-beta-L-fucoside, pNP-beta-D-xyloside, pNP-beta-L-arabinoside, pNP-beta-D-galuronide, pNP-beta-D-glucuronide, pNP-beta-D-lactoside or pNP-beta-D-cellobioside. In Arthrobacter sp, this protein is Beta-galactosidase.